A 129-amino-acid chain; its full sequence is Putative F-box protein At3g42722 (129 aa).

The region spanning 4-50 is the F-box domain; sequence MASIDCLPDELLVGILSFILTNEAASTSILSKRWRTLFAFSHNLDCN.

The protein is Putative F-box protein At3g42722 of Arabidopsis thaliana (Mouse-ear cress).